A 143-amino-acid chain; its full sequence is Nucleoside diphosphate kinase (143 aa).

Positions 11, 59, 87, 93, 104, and 114 each coordinate ATP. Residue H117 is the Pros-phosphohistidine intermediate of the active site.

It belongs to the NDK family. As to quaternary structure, homotetramer. The cofactor is Mg(2+).

The protein localises to the cytoplasm. It carries out the reaction a 2'-deoxyribonucleoside 5'-diphosphate + ATP = a 2'-deoxyribonucleoside 5'-triphosphate + ADP. The catalysed reaction is a ribonucleoside 5'-diphosphate + ATP = a ribonucleoside 5'-triphosphate + ADP. Functionally, major role in the synthesis of nucleoside triphosphates other than ATP. The ATP gamma phosphate is transferred to the NDP beta phosphate via a ping-pong mechanism, using a phosphorylated active-site intermediate. This chain is Nucleoside diphosphate kinase, found in Pseudomonas aeruginosa (strain UCBPP-PA14).